A 577-amino-acid polypeptide reads, in one-letter code: Arginine--tRNA ligase (577 aa).

Residues 122–132 carry the 'HIGH' region motif; the sequence is PNVAKEMHVGH.

Belongs to the class-I aminoacyl-tRNA synthetase family. Monomer.

It is found in the cytoplasm. It carries out the reaction tRNA(Arg) + L-arginine + ATP = L-arginyl-tRNA(Arg) + AMP + diphosphate. The protein is Arginine--tRNA ligase of Escherichia coli O7:K1 (strain IAI39 / ExPEC).